Consider the following 220-residue polypeptide: Small ribosomal subunit protein uS3 (220 aa).

Residues 38–106 (IRKYVKGRLK…RVHININEIK (69 aa)) form the KH type-2 domain.

It belongs to the universal ribosomal protein uS3 family. In terms of assembly, part of the 30S ribosomal subunit. Forms a tight complex with proteins S10 and S14.

Its function is as follows. Binds the lower part of the 30S subunit head. Binds mRNA in the 70S ribosome, positioning it for translation. This chain is Small ribosomal subunit protein uS3, found in Brevibacillus brevis (strain 47 / JCM 6285 / NBRC 100599).